We begin with the raw amino-acid sequence, 394 residues long: Elongation factor Tu (394 aa).

The tr-type G domain occupies 10-204 (KPHVNVGTIG…AMDDYIPAPE (195 aa)). Residues 19–26 (GHVDHGKT) are G1. 19 to 26 (GHVDHGKT) contributes to the GTP binding site. Thr26 is a binding site for Mg(2+). Residues 60-64 (GITIN) are G2. Residues 81–84 (DCPG) form a G3 region. Residues 81–85 (DCPGH) and 136–139 (NKCD) each bind GTP. Residues 136–139 (NKCD) form a G4 region. Positions 174-176 (SAL) are G5.

The protein belongs to the TRAFAC class translation factor GTPase superfamily. Classic translation factor GTPase family. EF-Tu/EF-1A subfamily. In terms of assembly, monomer.

The protein resides in the cytoplasm. It catalyses the reaction GTP + H2O = GDP + phosphate + H(+). Its function is as follows. GTP hydrolase that promotes the GTP-dependent binding of aminoacyl-tRNA to the A-site of ribosomes during protein biosynthesis. The polypeptide is Elongation factor Tu (Francisella tularensis subsp. holarctica (strain FTNF002-00 / FTA)).